The following is a 163-amino-acid chain: Augmin complex subunit wac (163 aa).

A coiled-coil region spans residues 86–115; sequence ELQRILSSIEEATRDVVMLERFNAAAEERL.

Component of the augmin complex composed of dgt2, dgt3, dgt4, dgt5, dgt6, msd1, msd5 and wac. The complex interacts directly or indirectly with microtubules and is required for centrosome-independent generation of spindle microtubules. wac interacts directly (via coiled coil) with dgt2. In adult females, detected only in the abdomen with no expression in the head or thorax (at protein level).

It is found in the cytoplasm. The protein resides in the cytoskeleton. Its subcellular location is the spindle. The protein localises to the spindle pole. Functionally, as part of the augmin complex, plays a role in centrosome-independent generation of spindle microtubules. The complex is required for mitotic spindle assembly through its involvement in localizing gamma-tubulin to spindle microtubules. wac is dispensable for somatic mitosis and for assembly of spindle microtubules in oocytes during female meiosis but is required during female meiosis for chromosome alignment and segregation. It is required for microtubule assembly near spindle poles in oocytes. It is also required for acentrosomal microtubule nucleation and meiotic spindle formation during male meiosis. wac binds to microtubules in vitro. The chain is Augmin complex subunit wac from Drosophila melanogaster (Fruit fly).